The following is a 158-amino-acid chain: D-aminoacyl-tRNA deacylase (158 aa).

The short motif at 138–139 (GP) is the Gly-cisPro motif, important for rejection of L-amino acids element.

This sequence belongs to the DTD family. Homodimer.

The protein resides in the cytoplasm. The catalysed reaction is glycyl-tRNA(Ala) + H2O = tRNA(Ala) + glycine + H(+). The enzyme catalyses a D-aminoacyl-tRNA + H2O = a tRNA + a D-alpha-amino acid + H(+). Functionally, an aminoacyl-tRNA editing enzyme that deacylates mischarged D-aminoacyl-tRNAs. Hydrolyzes correctly charged, achiral, glycyl-tRNA(Gly). Deacylates mischarged endogenous and E.coli glycyl-tRNA(Ala), protecting cells against glycine mischarging by AlaRS. Acts via tRNA-based rather than protein-based catalysis; rejects L-amino acids rather than detecting D-amino acids in the active site. By recycling D-aminoacyl-tRNA to D-amino acids and free tRNA molecules, this enzyme counteracts the toxicity associated with the formation of D-aminoacyl-tRNA entities in vivo and helps enforce protein L-homochirality. This chain is D-aminoacyl-tRNA deacylase, found in Drosophila melanogaster (Fruit fly).